A 152-amino-acid polypeptide reads, in one-letter code: MSLKIRLARGGAKKRPYYRIVVADSRSPRDGRFIEKIGSYNPMLPKDGQRVELDMEKVKAWIAKGAKPTDRVGRFIHQIEADAWKWEASNNPQKAEPGQKAKELAAEKAEKEADRKAAEEEAKAAAAAPAAEEAPAEEAPAAEAAAEEEKSE.

The interval 84-152 (WKWEASNNPQ…EAAAEEEKSE (69 aa)) is disordered. Basic and acidic residues predominate over residues 97-123 (PGQKAKELAAEKAEKEADRKAAEEEAK). A compositionally biased stretch (low complexity) spans 124–144 (AAAAAPAAEEAPAEEAPAAEA).

This sequence belongs to the bacterial ribosomal protein bS16 family.

In Maricaulis maris (strain MCS10) (Caulobacter maris), this protein is Small ribosomal subunit protein bS16.